The sequence spans 251 residues: PF03932 family protein CutC (251 aa).

It belongs to the CutC family.

It is found in the cytoplasm. The polypeptide is PF03932 family protein CutC (Agrobacterium fabrum (strain C58 / ATCC 33970) (Agrobacterium tumefaciens (strain C58))).